The following is a 553-amino-acid chain: Mannuronan C5-epimerase AlgE4 (553 aa).

PbH1 repeat units lie at residues 133–155, 157–179, 180–202, 204–226, 234–256, 257–279, 280–301, and 320–342; these read DRDV…DPHE, TINL…VADY, LVDS…NVVT, THDF…VVQR, PSNI…LLKM, TSDI…RVYG, AQDV…AVPE, and TLNT…GIQE. The segment at 367-427 is disordered; it reads YGPHSTVSGE…DILDGGAGRD (61 aa). Hemolysin-type calcium-binding repeat units follow at residues 403–420 and 421–438; these read QGGS…DDIL and DGGA…ADTF.

Belongs to the D-mannuronate C5-epimerase family. The cofactor is Ca(2+).

It is found in the secreted. It carries out the reaction [(1-&gt;4)-beta-D-mannuronosyl](n) = [alginate](n). It participates in glycan biosynthesis; alginate biosynthesis. With respect to regulation, inhibited by zinc. Its function is as follows. Converts beta-D-mannuronic acid (M) to alpha-L-guluronic acid (G), but introduces almost exclusively MG blocks, producing a polymer with non-gel-forming capacity. The sequence is that of Mannuronan C5-epimerase AlgE4 from Azotobacter vinelandii.